The primary structure comprises 714 residues: Phosphoribosylformylglycinamidine synthase subunit PurL (714 aa).

His34 is an active-site residue. Residue Tyr37 participates in ATP binding. Position 78 (Glu78) interacts with Mg(2+). Substrate contacts are provided by residues 79-82 and Arg101; that span reads SHNH. His80 functions as the Proton acceptor in the catalytic mechanism. A Mg(2+)-binding site is contributed by Asp102. Position 226 (Gln226) interacts with substrate. Residue Asp254 coordinates Mg(2+). 298–300 is a binding site for substrate; that stretch reads ESQ. ATP contacts are provided by Asp474 and Gly511. Asn512 lines the Mg(2+) pocket. Residue Ser514 coordinates substrate.

This sequence belongs to the FGAMS family. As to quaternary structure, monomer. Part of the FGAM synthase complex composed of 1 PurL, 1 PurQ and 2 PurS subunits.

Its subcellular location is the cytoplasm. The enzyme catalyses N(2)-formyl-N(1)-(5-phospho-beta-D-ribosyl)glycinamide + L-glutamine + ATP + H2O = 2-formamido-N(1)-(5-O-phospho-beta-D-ribosyl)acetamidine + L-glutamate + ADP + phosphate + H(+). Its pathway is purine metabolism; IMP biosynthesis via de novo pathway; 5-amino-1-(5-phospho-D-ribosyl)imidazole from N(2)-formyl-N(1)-(5-phospho-D-ribosyl)glycinamide: step 1/2. Part of the phosphoribosylformylglycinamidine synthase complex involved in the purines biosynthetic pathway. Catalyzes the ATP-dependent conversion of formylglycinamide ribonucleotide (FGAR) and glutamine to yield formylglycinamidine ribonucleotide (FGAM) and glutamate. The FGAM synthase complex is composed of three subunits. PurQ produces an ammonia molecule by converting glutamine to glutamate. PurL transfers the ammonia molecule to FGAR to form FGAM in an ATP-dependent manner. PurS interacts with PurQ and PurL and is thought to assist in the transfer of the ammonia molecule from PurQ to PurL. This Methanothermobacter marburgensis (strain ATCC BAA-927 / DSM 2133 / JCM 14651 / NBRC 100331 / OCM 82 / Marburg) (Methanobacterium thermoautotrophicum) protein is Phosphoribosylformylglycinamidine synthase subunit PurL.